Here is a 574-residue protein sequence, read N- to C-terminus: Intraflagellar transport protein 56 homolog (574 aa).

TPR repeat units follow at residues 20 to 52 (AQKM…GNLD), 57 to 90 (DSLQ…DDAP), and 151 to 184 (LEDR…SPNL).

It belongs to the IFT56 family. In terms of assembly, component of the IFT complex B composed of at least che-2, che-13, dyf-1, dyf-3, dyf-6, dyf-11, dyf-13, ift-20, ift-74, ift-81, ifta-2, osm-1, osm-5 and osm-6.

Its subcellular location is the cell projection. The protein resides in the cilium. In terms of biological role, component of the intraflagellar transport (IFT) complex B required for transport of proteins in the motile cilium. May be required for ciliary entrance and transport of specific ciliary cargo proteins such as che-3 which are related to motility. This chain is Intraflagellar transport protein 56 homolog, found in Caenorhabditis elegans.